The sequence spans 496 residues: NADH-quinone oxidoreductase subunit N (496 aa).

A run of 14 helical transmembrane segments spans residues 12-32 (LNLI…IILI), 43-63 (SLYV…TLGL), 79-99 (VSIV…PLAL), 108-128 (SYPE…FMVA), 132-152 (LILI…LIAL), 166-186 (FTMG…IYAL), 207-227 (GLMI…AFKL), 257-277 (VAAF…GVEW), 280-300 (VVIL…ALVQ), 306-326 (MLAY…ALDT), 333-353 (IFFY…MLWM), 383-403 (AVIM…SIFW), 416-436 (GYVW…YYYL), and 464-484 (AVVG…QPLV).

Belongs to the complex I subunit 2 family. As to quaternary structure, NDH-1 is composed of 14 different subunits. Subunits NuoA, H, J, K, L, M, N constitute the membrane sector of the complex.

It is found in the cell inner membrane. The enzyme catalyses a quinone + NADH + 5 H(+)(in) = a quinol + NAD(+) + 4 H(+)(out). In terms of biological role, NDH-1 shuttles electrons from NADH, via FMN and iron-sulfur (Fe-S) centers, to quinones in the respiratory chain. The immediate electron acceptor for the enzyme in this species is believed to be ubiquinone. Couples the redox reaction to proton translocation (for every two electrons transferred, four hydrogen ions are translocated across the cytoplasmic membrane), and thus conserves the redox energy in a proton gradient. The polypeptide is NADH-quinone oxidoreductase subunit N (Sulfurovum sp. (strain NBC37-1)).